Reading from the N-terminus, the 1868-residue chain is Protein TIC 214 (1868 aa).

Transmembrane regions (helical) follow at residues L11–F31, F64–L84, P87–N107, L126–L146, I166–S186, and I221–I241. Residues E248 to E276 are compositionally biased toward basic and acidic residues. Disordered regions lie at residues E248–Q277, F617–S643, D658–E700, T782–E806, and Y1537–K1607. The segment covering F617–T636 has biased composition (acidic residues). Positions A674–S683 are enriched in polar residues. Composition is skewed to basic and acidic residues over residues D684–E700, G789–E806, and Y1537–H1576.

Belongs to the TIC214 family. Part of the Tic complex.

The protein resides in the plastid. It localises to the chloroplast inner membrane. Involved in protein precursor import into chloroplasts. May be part of an intermediate translocation complex acting as a protein-conducting channel at the inner envelope. This Nuphar advena (Common spatterdock) protein is Protein TIC 214.